Consider the following 281-residue polypeptide: 4-diphosphocytidyl-2-C-methyl-D-erythritol kinase (281 aa).

Catalysis depends on residues Lys-11 and Asp-138.

It belongs to the GHMP kinase family. IspE subfamily.

The enzyme catalyses 4-CDP-2-C-methyl-D-erythritol + ATP = 4-CDP-2-C-methyl-D-erythritol 2-phosphate + ADP + H(+). It functions in the pathway isoprenoid biosynthesis; isopentenyl diphosphate biosynthesis via DXP pathway; isopentenyl diphosphate from 1-deoxy-D-xylulose 5-phosphate: step 3/6. In terms of biological role, catalyzes the phosphorylation of the position 2 hydroxy group of 4-diphosphocytidyl-2C-methyl-D-erythritol. This Pelagibacter ubique (strain HTCC1062) protein is 4-diphosphocytidyl-2-C-methyl-D-erythritol kinase.